Here is a 224-residue protein sequence, read N- to C-terminus: Ribose-5-phosphate isomerase A (224 aa).

Substrate is bound by residues 32–35, 85–88, and 98–101; these read TGST, DGAD, and KGGG. The active-site Proton acceptor is the Glu107. Residue Lys125 coordinates substrate.

It belongs to the ribose 5-phosphate isomerase family. As to quaternary structure, homodimer.

The enzyme catalyses aldehydo-D-ribose 5-phosphate = D-ribulose 5-phosphate. The protein operates within carbohydrate degradation; pentose phosphate pathway; D-ribose 5-phosphate from D-ribulose 5-phosphate (non-oxidative stage): step 1/1. Functionally, catalyzes the reversible conversion of ribose-5-phosphate to ribulose 5-phosphate. The chain is Ribose-5-phosphate isomerase A from Pseudomonas fluorescens (strain Pf0-1).